The following is a 78-amino-acid chain: Exodeoxyribonuclease 7 small subunit (78 aa).

Belongs to the XseB family. In terms of assembly, heterooligomer composed of large and small subunits.

Its subcellular location is the cytoplasm. The catalysed reaction is Exonucleolytic cleavage in either 5'- to 3'- or 3'- to 5'-direction to yield nucleoside 5'-phosphates.. Functionally, bidirectionally degrades single-stranded DNA into large acid-insoluble oligonucleotides, which are then degraded further into small acid-soluble oligonucleotides. The protein is Exodeoxyribonuclease 7 small subunit of Mycobacterium leprae (strain TN).